The following is a 465-amino-acid chain: Ribulose bisphosphate carboxylase large chain (465 aa).

K4 is subject to N6,N6,N6-trimethyllysine. Substrate is bound by residues N113 and T163. K165 functions as the Proton acceptor in the catalytic mechanism. K167 contributes to the substrate binding site. Mg(2+)-binding residues include K191, D193, and E194. N6-carboxylysine is present on K191. H284 functions as the Proton acceptor in the catalytic mechanism. R285, H317, and S369 together coordinate substrate.

This sequence belongs to the RuBisCO large chain family. Type I subfamily. Heterohexadecamer of 8 large chains and 8 small chains; disulfide-linked. The disulfide link is formed within the large subunit homodimers. The cofactor is Mg(2+). Post-translationally, the disulfide bond which can form in the large chain dimeric partners within the hexadecamer appears to be associated with oxidative stress and protein turnover.

It is found in the plastid. The protein localises to the chloroplast. The enzyme catalyses 2 (2R)-3-phosphoglycerate + 2 H(+) = D-ribulose 1,5-bisphosphate + CO2 + H2O. It carries out the reaction D-ribulose 1,5-bisphosphate + O2 = 2-phosphoglycolate + (2R)-3-phosphoglycerate + 2 H(+). Functionally, ruBisCO catalyzes two reactions: the carboxylation of D-ribulose 1,5-bisphosphate, the primary event in carbon dioxide fixation, as well as the oxidative fragmentation of the pentose substrate in the photorespiration process. Both reactions occur simultaneously and in competition at the same active site. The chain is Ribulose bisphosphate carboxylase large chain from Byrsonima crassifolia (Cajuil cimarron).